Reading from the N-terminus, the 387-residue chain is Succinate--CoA ligase [ADP-forming] subunit beta (387 aa).

The 236-residue stretch at 9 to 244 (KRLLAEEGVP…STQQDGREIT (236 aa)) folds into the ATP-grasp domain. ATP-binding positions include lysine 46, 53-55 (GRG), glutamate 99, serine 102, and glutamate 107. Asparagine 199 and aspartate 213 together coordinate Mg(2+). Residues asparagine 264 and 321 to 323 (GIT) each bind substrate.

It belongs to the succinate/malate CoA ligase beta subunit family. In terms of assembly, heterotetramer of two alpha and two beta subunits. It depends on Mg(2+) as a cofactor.

The enzyme catalyses succinate + ATP + CoA = succinyl-CoA + ADP + phosphate. It carries out the reaction GTP + succinate + CoA = succinyl-CoA + GDP + phosphate. It participates in carbohydrate metabolism; tricarboxylic acid cycle; succinate from succinyl-CoA (ligase route): step 1/1. Succinyl-CoA synthetase functions in the citric acid cycle (TCA), coupling the hydrolysis of succinyl-CoA to the synthesis of either ATP or GTP and thus represents the only step of substrate-level phosphorylation in the TCA. The beta subunit provides nucleotide specificity of the enzyme and binds the substrate succinate, while the binding sites for coenzyme A and phosphate are found in the alpha subunit. In Acidithiobacillus ferrooxidans (strain ATCC 23270 / DSM 14882 / CIP 104768 / NCIMB 8455) (Ferrobacillus ferrooxidans (strain ATCC 23270)), this protein is Succinate--CoA ligase [ADP-forming] subunit beta.